A 323-amino-acid chain; its full sequence is GTP 3',8-cyclase (323 aa).

The 223-residue stretch at 4-226 (TFQRQINYLR…LEPFPDLATN (223 aa)) folds into the Radical SAM core domain. Arg13 is a binding site for GTP. [4Fe-4S] cluster is bound by residues Cys20 and Cys24. An S-adenosyl-L-methionine-binding site is contributed by Tyr26. Cys27 contacts [4Fe-4S] cluster. Arg63 contacts GTP. Gly67 lines the S-adenosyl-L-methionine pocket. Thr94 is a binding site for GTP. Ser118 serves as a coordination point for S-adenosyl-L-methionine. Lys155 serves as a coordination point for GTP. Met189 is an S-adenosyl-L-methionine binding site. [4Fe-4S] cluster is bound by residues Cys252 and Cys255. 257 to 259 (RLR) is a binding site for GTP. Cys269 contacts [4Fe-4S] cluster.

This sequence belongs to the radical SAM superfamily. MoaA family. Monomer and homodimer. [4Fe-4S] cluster is required as a cofactor.

The catalysed reaction is GTP + AH2 + S-adenosyl-L-methionine = (8S)-3',8-cyclo-7,8-dihydroguanosine 5'-triphosphate + 5'-deoxyadenosine + L-methionine + A + H(+). Its pathway is cofactor biosynthesis; molybdopterin biosynthesis. Its function is as follows. Catalyzes the cyclization of GTP to (8S)-3',8-cyclo-7,8-dihydroguanosine 5'-triphosphate. The sequence is that of GTP 3',8-cyclase from Moorella thermoacetica (strain ATCC 39073 / JCM 9320).